We begin with the raw amino-acid sequence, 360 residues long: Phospho-N-acetylmuramoyl-pentapeptide-transferase (360 aa).

Transmembrane regions (helical) follow at residues 27-47 (GAIATALFFVFFFGPNIIKSL), 72-92 (TPTMGGLMILSGLFVSTLLWA), 94-114 (LSNHYVWVVLWVMLGYGAIGF), 135-155 (LACEAGVALVACIAMMKLGTP), 167-187 (GYVVDLGLFFLIFGPFVIVAS), 199-219 (GLAIVPVMIAAGTFGIIAYLV), 236-256 (AGELAVVSGAVIGAGLGFLWF), 263-283 (IFMGDTGSLALGGLLGTIAVA), 289-309 (VLAIVGGLFALETLSVIVQVV), and 337-357 (QVVVRFWIIAFVLALVGLSTL).

It belongs to the glycosyltransferase 4 family. MraY subfamily. The cofactor is Mg(2+).

The protein resides in the cell inner membrane. It carries out the reaction UDP-N-acetyl-alpha-D-muramoyl-L-alanyl-gamma-D-glutamyl-meso-2,6-diaminopimeloyl-D-alanyl-D-alanine + di-trans,octa-cis-undecaprenyl phosphate = di-trans,octa-cis-undecaprenyl diphospho-N-acetyl-alpha-D-muramoyl-L-alanyl-D-glutamyl-meso-2,6-diaminopimeloyl-D-alanyl-D-alanine + UMP. The protein operates within cell wall biogenesis; peptidoglycan biosynthesis. Catalyzes the initial step of the lipid cycle reactions in the biosynthesis of the cell wall peptidoglycan: transfers peptidoglycan precursor phospho-MurNAc-pentapeptide from UDP-MurNAc-pentapeptide onto the lipid carrier undecaprenyl phosphate, yielding undecaprenyl-pyrophosphoryl-MurNAc-pentapeptide, known as lipid I. This is Phospho-N-acetylmuramoyl-pentapeptide-transferase from Beijerinckia indica subsp. indica (strain ATCC 9039 / DSM 1715 / NCIMB 8712).